A 352-amino-acid chain; its full sequence is tRNA-specific 2-thiouridylase MnmA (352 aa).

ATP is bound by residues 6–13 (AMSGGVDS) and L32. C101 (nucleophile) is an active-site residue. An intrachain disulfide couples C101 to C194. G125 provides a ligand contact to ATP. Positions 144-146 (KDQ) are interaction with tRNA. C194 acts as the Cysteine persulfide intermediate in catalysis.

It belongs to the MnmA/TRMU family.

Its subcellular location is the cytoplasm. It carries out the reaction S-sulfanyl-L-cysteinyl-[protein] + uridine(34) in tRNA + AH2 + ATP = 2-thiouridine(34) in tRNA + L-cysteinyl-[protein] + A + AMP + diphosphate + H(+). Functionally, catalyzes the 2-thiolation of uridine at the wobble position (U34) of tRNA, leading to the formation of s(2)U34. This is tRNA-specific 2-thiouridylase MnmA from Frankia casuarinae (strain DSM 45818 / CECT 9043 / HFP020203 / CcI3).